The following is a 1481-amino-acid chain: Protein shortage in chiasmata 1 ortholog (1481 aa).

2 disordered regions span residues 479–498 and 512–560; these read TDVH…EKEV and KSKV…IQAS. A compositionally biased stretch (basic and acidic residues) spans 513-531; sequence SKVEANPKNDQEPEARIMQ. Positions 543 to 560 are enriched in low complexity; the sequence is SSQVPSAESASSSQIQAS.

Belongs to the XPF family. Highly divergent. In terms of assembly, interacts with TEX11. Interacts with SPO16. In terms of tissue distribution, mainly expressed in adult testis.

It localises to the chromosome. In terms of biological role, ATPase required during meiosis for the formation of crossover recombination intermediates. Binds DNA: preferentially binds to single-stranded DNA and DNA branched structures. Does not show nuclease activity in vitro, but shows ATPase activity, which is stimulated by the presence of single-stranded DNA. Plays a key role in homologous recombination and crossing-over in meiotic prophase I in male and female germ cells. Required for proper synaptonemal complex assembly and homologous chromosome pairing. Required for recruitment of TEX11 and MSH4 to recombination intermediates. The protein is Protein shortage in chiasmata 1 ortholog of Mus musculus (Mouse).